The sequence spans 383 residues: D-alanine--D-alanine ligase (383 aa).

The ATP-grasp domain maps to lysine 169–arginine 373. Glutamine 196 to glutamate 251 is a binding site for ATP. The Mg(2+) site is built by aspartate 327, glutamate 340, and asparagine 342.

The protein belongs to the D-alanine--D-alanine ligase family. Mg(2+) serves as cofactor. Mn(2+) is required as a cofactor.

It is found in the cytoplasm. It carries out the reaction 2 D-alanine + ATP = D-alanyl-D-alanine + ADP + phosphate + H(+). It participates in cell wall biogenesis; peptidoglycan biosynthesis. Its function is as follows. Cell wall formation. This chain is D-alanine--D-alanine ligase, found in Frankia casuarinae (strain DSM 45818 / CECT 9043 / HFP020203 / CcI3).